The primary structure comprises 168 residues: MIDLGISKLALIGAVALIVIGPERLPRVARTVGALVGRAQRYINDVKAEVSREVELEELRKMRTEFEDAARDVERTIHKEVSEQTQALNEALGGIEPSAESGGGVSDFVPSWHSAHKAHNGRKSWRVKQGARPLWFKRQNNVRVWVQSGAARVKRHRPAAGRARSFFE.

Residues 1–21 (MIDLGISKLALIGAVALIVIG) form a helical membrane-spanning segment.

It belongs to the TatB family. In terms of assembly, the Tat system comprises two distinct complexes: a TatABC complex, containing multiple copies of TatA, TatB and TatC subunits, and a separate TatA complex, containing only TatA subunits. Substrates initially bind to the TatABC complex, which probably triggers association of the separate TatA complex to form the active translocon.

The protein resides in the cell inner membrane. Its function is as follows. Part of the twin-arginine translocation (Tat) system that transports large folded proteins containing a characteristic twin-arginine motif in their signal peptide across membranes. Together with TatC, TatB is part of a receptor directly interacting with Tat signal peptides. TatB may form an oligomeric binding site that transiently accommodates folded Tat precursor proteins before their translocation. The polypeptide is Sec-independent protein translocase protein TatB (Cupriavidus pinatubonensis (strain JMP 134 / LMG 1197) (Cupriavidus necator (strain JMP 134))).